The sequence spans 440 residues: Kinetochore protein NUF2 homolog (440 aa).

2 coiled-coil regions span residues 142–239 (LGLL…LRSQ) and 299–386 (INEQ…RQTN).

The protein belongs to the NUF2 family. As to quaternary structure, component of the NDC80 complex, which consists of NDC80, NUF2, SPC24 and SPC25.

It is found in the chromosome. It localises to the centromere. Functionally, acts as a component of the essential kinetochore-associated NDC80 complex, which is required for chromosome segregation and spindle checkpoint activity to ensure proper cell division. The sequence is that of Kinetochore protein NUF2 homolog from Arabidopsis thaliana (Mouse-ear cress).